A 246-amino-acid chain; its full sequence is MSRGSSAGFDRHITIFSPEGRVYQVEYAFKAINSTNLTAVAVKGADAAVIAVQKRVPDSLIVADTVTSVYQISQSVGCCAIGMIPDAKFQIKRAQGEAASWKYKNGYDMPCELLAKKMADLNQYYTQNAEMRSLGCALLFISYDDEKGPEVYRVDPAGYYRGMKGVSVGVKQLPATSFLEKKIKKKSELTSTEAIELAIEALQTSLGIDVRSKDLEVVVVTKDNSKFTKLTSDQVEHHLNQIANRD.

It belongs to the peptidase T1A family. In terms of assembly, the 26S proteasome consists of a 20S proteasome core and two 19S regulatory subunits. The 20S proteasome core is composed of 28 subunits that are arranged in four stacked rings, resulting in a barrel-shaped structure. The two end rings are each formed by seven alpha subunits, and the two central rings are each formed by seven beta subunits. The catalytic chamber with the active sites is on the inside of the barrel.

It localises to the cytoplasm. Its subcellular location is the nucleus. The proteasome is a multicatalytic proteinase complex which is characterized by its ability to cleave peptides with Arg, Phe, Tyr, Leu, and Glu adjacent to the leaving group at neutral or slightly basic pH. The proteasome has an ATP-dependent proteolytic activity. The chain is Proteasome subunit alpha type-6 (pas-1) from Caenorhabditis elegans.